The sequence spans 504 residues: Cytochrome P450 2K1 (504 aa).

Cysteine 447 provides a ligand contact to heme.

Belongs to the cytochrome P450 family. It depends on heme as a cofactor.

The protein localises to the endoplasmic reticulum membrane. Its subcellular location is the microsome membrane. The enzyme catalyses an organic molecule + reduced [NADPH--hemoprotein reductase] + O2 = an alcohol + oxidized [NADPH--hemoprotein reductase] + H2O + H(+). This Oncorhynchus mykiss (Rainbow trout) protein is Cytochrome P450 2K1 (cyp2k1).